The primary structure comprises 195 residues: Rubrerythrin-1 (195 aa).

Residues 3-150 (SLKGTKTAEN…ALLKNIEENK (148 aa)) form the Ferritin-like diiron domain. The Fe(3+) site is built by glutamate 20, glutamate 53, glutamate 98, glutamate 101, glutamate 132, histidine 135, cysteine 162, cysteine 165, cysteine 178, and cysteine 181. Residues 157-191 (VKFWKCIKCGYIFEGKTAPKVCPACLHPQAYFEIL) enclose the Rubredoxin-like domain.

Homodimer. Fe(3+) serves as cofactor.

The enzyme catalyses H2O2 + NADH + H(+) = NAD(+) + 2 H2O. Rubredoxin (Rd) increases the NADH consumption rate by serving as an intermediary electron-transfer shuttle between NROR and RubY. Functionally, functions as the terminal component of an NADH peroxidase (NADH:H(2)O(2) oxidoreductase) when using NADH:rubredoxin oxidoreductase (NROR) as the electron transport intermediary from NADH to RubY. The chain is Rubrerythrin-1 (rbr1) from Clostridium acetobutylicum (strain ATCC 824 / DSM 792 / JCM 1419 / IAM 19013 / LMG 5710 / NBRC 13948 / NRRL B-527 / VKM B-1787 / 2291 / W).